A 212-amino-acid polypeptide reads, in one-letter code: MQILLAALVAYLIGSVSFAVVVSAAMGLADPRSYGSKNPGATNVLRSGNKKAAILTLVGDAFKGWLAVWLARHFGLPDVAVAWVAIAVFLGHLYPVFFRFQGGKGVATAAGVLLAVHPVLGLATALTWLIVAFFFRYSSLAALVAAVFAPLFDVFLFGTRHNPVAWAVLAMSVLLVWRHRGNISKLLAGQESRIGDKKKAAANGGAQDGGKL.

The next 5 membrane-spanning stretches (helical) occupy residues 3 to 23, 51 to 71, 78 to 98, 115 to 135, and 139 to 159; these read ILLAALVAYLIGSVSFAVVVS, KAAILTLVGDAFKGWLAVWLA, DVAVAWVAIAVFLGHLYPVFF, AVHPVLGLATALTWLIVAFFF, and SLAALVAAVFAPLFDVFLFGT.

It belongs to the PlsY family. In terms of assembly, probably interacts with PlsX.

It localises to the cell inner membrane. The enzyme catalyses an acyl phosphate + sn-glycerol 3-phosphate = a 1-acyl-sn-glycero-3-phosphate + phosphate. It functions in the pathway lipid metabolism; phospholipid metabolism. Its function is as follows. Catalyzes the transfer of an acyl group from acyl-phosphate (acyl-PO(4)) to glycerol-3-phosphate (G3P) to form lysophosphatidic acid (LPA). This enzyme utilizes acyl-phosphate as fatty acyl donor, but not acyl-CoA or acyl-ACP. This chain is Glycerol-3-phosphate acyltransferase, found in Burkholderia ambifaria (strain MC40-6).